A 618-amino-acid chain; its full sequence is UvrABC system protein C (618 aa).

The region spanning 13–92 (DKPGVYLMKN…IKKYRPKYNI (80 aa)) is the GIY-YIG domain. The UVR domain occupies 204 to 239 (LDIVENFKLNMEKAAGNLEFEKAAMLRDKINIIEKI).

It belongs to the UvrC family. Interacts with UvrB in an incision complex.

It is found in the cytoplasm. The UvrABC repair system catalyzes the recognition and processing of DNA lesions. UvrC both incises the 5' and 3' sides of the lesion. The N-terminal half is responsible for the 3' incision and the C-terminal half is responsible for the 5' incision. This Clostridium botulinum (strain 657 / Type Ba4) protein is UvrABC system protein C.